A 240-amino-acid chain; its full sequence is Lactate utilization protein C (240 aa).

It belongs to the LutC/YkgG family.

Is involved in L-lactate degradation and allows cells to grow with lactate as the sole carbon source. This Geobacillus kaustophilus (strain HTA426) protein is Lactate utilization protein C.